The primary structure comprises 309 residues: Probable manganese-dependent inorganic pyrophosphatase (309 aa).

Histidine 9, aspartate 13, aspartate 15, aspartate 75, histidine 97, and aspartate 149 together coordinate Mn(2+).

This sequence belongs to the PPase class C family. It depends on Mn(2+) as a cofactor.

It is found in the cytoplasm. The enzyme catalyses diphosphate + H2O = 2 phosphate + H(+). The polypeptide is Probable manganese-dependent inorganic pyrophosphatase (Exiguobacterium sp. (strain ATCC BAA-1283 / AT1b)).